The following is a 128-amino-acid chain: MNLIQQLEKEQFDKLSANKTIPEFGPGDTVIVNVKVVEGERTRVQAYEGVCIGRSGGGINESFTVRKISYGEGVERVFPILSPMIDSIKVVRRGKVRRAKLYYLRQLRGKSARIVEKQDRQQAAAVNE.

It belongs to the bacterial ribosomal protein bL19 family.

Functionally, this protein is located at the 30S-50S ribosomal subunit interface and may play a role in the structure and function of the aminoacyl-tRNA binding site. The polypeptide is Large ribosomal subunit protein bL19 (Bradyrhizobium sp. (strain ORS 278)).